Reading from the N-terminus, the 224-residue chain is Ribosomal RNA large subunit methyltransferase E (224 aa).

Residues Gly-60, Trp-62, Asp-93, Asp-109, and Asp-137 each contribute to the S-adenosyl-L-methionine site. Lys-177 (proton acceptor) is an active-site residue.

The protein belongs to the class I-like SAM-binding methyltransferase superfamily. RNA methyltransferase RlmE family.

It localises to the cytoplasm. It catalyses the reaction uridine(2552) in 23S rRNA + S-adenosyl-L-methionine = 2'-O-methyluridine(2552) in 23S rRNA + S-adenosyl-L-homocysteine + H(+). Its function is as follows. Specifically methylates the uridine in position 2552 of 23S rRNA at the 2'-O position of the ribose in the fully assembled 50S ribosomal subunit. The protein is Ribosomal RNA large subunit methyltransferase E of Polynucleobacter asymbioticus (strain DSM 18221 / CIP 109841 / QLW-P1DMWA-1) (Polynucleobacter necessarius subsp. asymbioticus).